The chain runs to 264 residues: Somatomedin-B and thrombospondin type-1 domain-containing protein (264 aa).

A signal peptide spans methionine 1 to alanine 20. One can recognise an SMB domain in the interval glutamate 24–cysteine 75. 7 cysteine pairs are disulfide-bonded: cysteine 28–cysteine 36, cysteine 28–cysteine 52, cysteine 36–cysteine 70, cysteine 50–cysteine 52, cysteine 50–cysteine 63, cysteine 56–cysteine 62, and cysteine 63–cysteine 70. The TSP type-1 domain maps to proline 74–serine 125. Residue asparagine 227 is glycosylated (N-linked (GlcNAc...) asparagine).

It belongs to the thrombospondin family.

The protein resides in the secreted. Its subcellular location is the extracellular space. It is found in the extracellular matrix. The chain is Somatomedin-B and thrombospondin type-1 domain-containing protein (Sbspon) from Mus musculus (Mouse).